Consider the following 609-residue polypeptide: Proteasome-associated ATPase (609 aa).

Residues M1 to A24 are disordered. The stretch at S19–Q96 forms a coiled coil. G296–L301 is an ATP binding site. Residues Y608–L609 are docks into pockets in the proteasome alpha-ring.

This sequence belongs to the AAA ATPase family. As to quaternary structure, homohexamer. Assembles into a hexameric ring structure that caps the 20S proteasome core. Strongly interacts with the prokaryotic ubiquitin-like protein Pup through a hydrophobic interface; the interacting region of ARC lies in its N-terminal coiled-coil domain. There is one Pup binding site per ARC hexamer ring. Upon ATP-binding, the C-terminus of ARC interacts with the alpha-rings of the proteasome core, possibly by binding to the intersubunit pockets.

It functions in the pathway protein degradation; proteasomal Pup-dependent pathway. In terms of biological role, ATPase which is responsible for recognizing, binding, unfolding and translocation of pupylated proteins into the bacterial 20S proteasome core particle. May be essential for opening the gate of the 20S proteasome via an interaction with its C-terminus, thereby allowing substrate entry and access to the site of proteolysis. Thus, the C-termini of the proteasomal ATPase may function like a 'key in a lock' to induce gate opening and therefore regulate proteolysis. This Mycobacterium ulcerans (strain Agy99) protein is Proteasome-associated ATPase.